Consider the following 320-residue polypeptide: Ferrochelatase (320 aa).

Positions 194 and 275 each coordinate Fe cation.

Belongs to the ferrochelatase family. Monomer.

Its subcellular location is the cytoplasm. The catalysed reaction is heme b + 2 H(+) = protoporphyrin IX + Fe(2+). It functions in the pathway porphyrin-containing compound metabolism; protoheme biosynthesis; protoheme from protoporphyrin-IX: step 1/1. Its function is as follows. Catalyzes the ferrous insertion into protoporphyrin IX. The protein is Ferrochelatase of Salmonella arizonae (strain ATCC BAA-731 / CDC346-86 / RSK2980).